The following is a 146-amino-acid chain: Leghemoglobin 2 (146 aa).

In terms of domain architecture, Globin spans 2–146 (GFTAQQDALV…LAAAIKKAMS (145 aa)). Tyrosine 30 carries the nitrated tyrosine modification. Serine 45 is a heme b binding site. Serine 45 carries the post-translational modification Phosphoserine. Histidine 61 serves as a coordination point for O2. Positions 64, 93, and 96 each coordinate heme b. Tyrosine 134 bears the Nitrated tyrosine mark.

This sequence belongs to the plant globin family. As to quaternary structure, monomer. Nitrated in effective nodules and particularly in hypoxic conditions; this mechanism may play a protective role in the symbiosis by buffering toxic peroxynitrite NO(2)(-). Nitration level decrease during nodule senescence. Post-translationally, phosphorylation at Ser-45 disrupts the molecular environment of its porphyrin ring oxygen binding pocket, thus leading to a reduced oxygen consumption and to the delivery of oxygen O(2) to symbiosomes. Specifically and strongly expressed in root nodules and at low levels in seedlings.

It is found in the cytoplasm. The protein localises to the cytosol. Its subcellular location is the nucleus. Leghemoglobin that reversibly binds oxygen O(2) through a pentacoordinated heme iron. In root nodules, facilitates the diffusion of oxygen to the bacteroids while preventing the bacterial nitrogenase from being inactivated by buffering dioxygen, nitric oxide and carbon monoxide, and promoting the formation of reactive oxygen species (ROS, e.g. H(2)O(2)). This role is essential for symbiotic nitrogen fixation (SNF). In Lotus japonicus (Lotus corniculatus var. japonicus), this protein is Leghemoglobin 2.